A 156-amino-acid chain; its full sequence is Small ribosomal subunit protein uS7 (156 aa).

It belongs to the universal ribosomal protein uS7 family. Part of the 30S ribosomal subunit. Contacts proteins S9 and S11.

Its function is as follows. One of the primary rRNA binding proteins, it binds directly to 16S rRNA where it nucleates assembly of the head domain of the 30S subunit. Is located at the subunit interface close to the decoding center, probably blocks exit of the E-site tRNA. The sequence is that of Small ribosomal subunit protein uS7 from Citrifermentans bemidjiense (strain ATCC BAA-1014 / DSM 16622 / JCM 12645 / Bem) (Geobacter bemidjiensis).